The chain runs to 856 residues: Alanine/arginine aminopeptidase (856 aa).

Residues E132 and 264–268 contribute to the substrate site; that span reads GAMEN. H300 serves as a coordination point for Zn(2+). The active-site Proton acceptor is the E301. Positions 304 and 323 each coordinate Zn(2+).

This sequence belongs to the peptidase M1 family. Requires Zn(2+) as cofactor.

Functionally, positive effector of glycogen accumulation. May be involved in nutrient-sensing. This Saccharomyces cerevisiae (strain ATCC 204508 / S288c) (Baker's yeast) protein is Alanine/arginine aminopeptidase (AAP1).